A 306-amino-acid chain; its full sequence is Ornithine carbamoyltransferase (306 aa).

Carbamoyl phosphate is bound by residues 53 to 56 (STRT), glutamine 80, arginine 104, and 131 to 134 (HPCQ). Residues asparagine 162, aspartate 220, and 224–225 (SM) contribute to the L-ornithine site. Carbamoyl phosphate contacts are provided by residues 260–261 (CL) and arginine 288.

It belongs to the aspartate/ornithine carbamoyltransferase superfamily. OTCase family.

Its subcellular location is the cytoplasm. The enzyme catalyses carbamoyl phosphate + L-ornithine = L-citrulline + phosphate + H(+). The protein operates within amino-acid biosynthesis; L-arginine biosynthesis; L-arginine from L-ornithine and carbamoyl phosphate: step 1/3. In terms of biological role, reversibly catalyzes the transfer of the carbamoyl group from carbamoyl phosphate (CP) to the N(epsilon) atom of ornithine (ORN) to produce L-citrulline. The polypeptide is Ornithine carbamoyltransferase (Methylobacillus flagellatus (strain ATCC 51484 / DSM 6875 / VKM B-1610 / KT)).